The chain runs to 138 residues: Small ribosomal subunit protein uS11c (138 aa).

The disordered stretch occupies residues 1–23 (MAKAIPRVGSRKNGRISSRKSAR). Positions 9-23 (GSRKNGRISSRKSAR) are enriched in basic residues.

The protein belongs to the universal ribosomal protein uS11 family. In terms of assembly, part of the 30S ribosomal subunit.

It is found in the plastid. The protein resides in the chloroplast. The protein is Small ribosomal subunit protein uS11c of Coffea arabica (Arabian coffee).